Reading from the N-terminus, the 62-residue chain is Large ribosomal subunit protein uL29 (62 aa).

This sequence belongs to the universal ribosomal protein uL29 family.

In Helicobacter hepaticus (strain ATCC 51449 / 3B1), this protein is Large ribosomal subunit protein uL29.